The following is a 177-amino-acid chain: ATP-dependent protease subunit HslV (177 aa).

Threonine 2 is an active-site residue. Residues glycine 157, cysteine 160, and threonine 163 each contribute to the Na(+) site.

Belongs to the peptidase T1B family. HslV subfamily. In terms of assembly, a double ring-shaped homohexamer of HslV is capped on each side by a ring-shaped HslU homohexamer. The assembly of the HslU/HslV complex is dependent on binding of ATP.

It is found in the cytoplasm. It catalyses the reaction ATP-dependent cleavage of peptide bonds with broad specificity.. Its activity is regulated as follows. Allosterically activated by HslU binding. Protease subunit of a proteasome-like degradation complex believed to be a general protein degrading machinery. The polypeptide is ATP-dependent protease subunit HslV (Aeromonas hydrophila subsp. hydrophila (strain ATCC 7966 / DSM 30187 / BCRC 13018 / CCUG 14551 / JCM 1027 / KCTC 2358 / NCIMB 9240 / NCTC 8049)).